The sequence spans 789 residues: Protein FLOWERING LOCUS D (789 aa).

A disordered region spans residues 1–23 (MVSFSAPKKRRRGRSQRSMSSLN). Residues 76–177 (NKEATTEALL…FGIAQAIKDK (102 aa)) enclose the SWIRM domain. Residues S195, E214, R216, R222, and 240 to 243 (GGSV) contribute to the FAD site. Residue K287 forms a Glycyl lysine isopeptide (Lys-Gly) (interchain with G-Cter in SUMO) linkage. FAD contacts are provided by residues E595, 604 to 605 (TM), and 607 to 612 (GAFVTG). Residues K693 and K770 each participate in a glycyl lysine isopeptide (Lys-Gly) (interchain with G-Cter in SUMO) cross-link.

It belongs to the flavin monoamine oxidase family. Interacts with HDA6. The cofactor is FAD. Post-translationally, sumoylated at Lys-287, Lys-693 and Lys-770 by SIZ1. Sumoylation alters its activity and the histone H4 acetylation status of FLC locus, promoting FLC expression.

Probable histone demethylase that promotes flowering independently of the photoperiod and vernalization pathways by repressing FLOWERING LOCUS C (FLC), a floral repressor that blocks the transition from vegetative to reproductive development. Probably mediates histone H3 'Lys-4' demethylation at FLC locus. Seems to act in partial redundancy with LDL1 and LDL2 to repress FLC expression. Required for histone H4 deacetylation of FLC locus. May be a component of the histone deacetylase complex. Forms a histone deacetylase complex with HDA5, HDA6 and MSI4/FVE that represses FLC gene expression to control flowering time. Required for systemic acquired resistance (SAR) toward pathogenic bacteria (e.g. Pseudomonas syringae pv tomato DC3000 (avrPto)). Together with FLD and MSI4/FVE, contributes to dehydroabietinal-dependent (DA, a diterpenoid tricyclic diterpene) activation of flowering ans SAR. The protein is Protein FLOWERING LOCUS D of Arabidopsis thaliana (Mouse-ear cress).